The sequence spans 225 residues: Protein-L-isoaspartate O-methyltransferase (225 aa).

Ser-75 is a catalytic residue.

This sequence belongs to the methyltransferase superfamily. L-isoaspartyl/D-aspartyl protein methyltransferase family.

The protein resides in the cytoplasm. It carries out the reaction [protein]-L-isoaspartate + S-adenosyl-L-methionine = [protein]-L-isoaspartate alpha-methyl ester + S-adenosyl-L-homocysteine. Catalyzes the methyl esterification of L-isoaspartyl residues in peptides and proteins that result from spontaneous decomposition of normal L-aspartyl and L-asparaginyl residues. It plays a role in the repair and/or degradation of damaged proteins. This chain is Protein-L-isoaspartate O-methyltransferase, found in Xylella fastidiosa (strain 9a5c).